Here is a 202-residue protein sequence, read N- to C-terminus: Oxopyrrolidines biosynthesis cluster protein O (202 aa).

Functionally, part of the gene cluster that mediates the biosynthesis of oxopyrrolidines, polyketide-amino acid hybrid compounds with feature structures of tetramic acid. Does not seem to play a role in oxopyrrolidines A and B biosynthesis. The protein is Oxopyrrolidines biosynthesis cluster protein O of Penicillium oxalicum (strain 114-2 / CGMCC 5302) (Penicillium decumbens).